The primary structure comprises 257 residues: Probable dihydroorotate dehydrogenase B (NAD(+)), electron transfer subunit (257 aa).

The 88-residue stretch at 2 to 89 (EKPVICRIKE…RGPYGTYFEP (88 aa)) folds into the FAD-binding FR-type domain. [2Fe-2S] cluster-binding residues include Cys-208, Cys-213, Cys-216, and Cys-226.

This sequence belongs to the PyrK family. As to quaternary structure, heterotetramer of 2 PyrK and 2 PyrD type B subunits. [2Fe-2S] cluster serves as cofactor. The cofactor is FAD.

The protein operates within pyrimidine metabolism; UMP biosynthesis via de novo pathway; orotate from (S)-dihydroorotate (NAD(+) route): step 1/1. In terms of biological role, responsible for channeling the electrons from the oxidation of dihydroorotate from the FMN redox center in the PyrD type B subunit to the ultimate electron acceptor NAD(+). The chain is Probable dihydroorotate dehydrogenase B (NAD(+)), electron transfer subunit from Methanocaldococcus jannaschii (strain ATCC 43067 / DSM 2661 / JAL-1 / JCM 10045 / NBRC 100440) (Methanococcus jannaschii).